A 164-amino-acid polypeptide reads, in one-letter code: Cell division protein SepF (164 aa).

The segment at 21 to 71 is disordered; sequence YQQGQQPAQQQQSPVQAVPTPAPAPQQQAKRAPVTPLHKPSTTTRNAAPAE. Residues 22–54 show a composition bias toward low complexity; it reads QQGQQPAQQQQSPVQAVPTPAPAPQQQAKRAPV.

The protein belongs to the SepF family. As to quaternary structure, homodimer. Interacts with FtsZ.

It is found in the cytoplasm. Its function is as follows. Cell division protein that is part of the divisome complex and is recruited early to the Z-ring. Probably stimulates Z-ring formation, perhaps through the cross-linking of FtsZ protofilaments. Its function overlaps with FtsA. This Clavibacter michiganensis subsp. michiganensis (strain NCPPB 382) protein is Cell division protein SepF.